The following is a 374-amino-acid chain: Chaperone protein DnaJ (374 aa).

Positions 5–70 constitute a J domain; the sequence is DYYEVLGVNL…RKRASYDQFG (66 aa). A CR-type zinc finger spans residues 133–210; the sequence is GLSRTIKVPT…CHGQGRQQQT (78 aa). Cysteine 146, cysteine 149, cysteine 162, cysteine 165, cysteine 184, cysteine 187, cysteine 198, and cysteine 201 together coordinate Zn(2+). CXXCXGXG motif repeat units lie at residues 146–153, 162–169, 184–191, and 198–205; these read CKTCNGSG, CPRCNGSG, CSVCRGRG, and CTDCHGQG.

This sequence belongs to the DnaJ family. In terms of assembly, homodimer. Requires Zn(2+) as cofactor.

Its subcellular location is the cytoplasm. Participates actively in the response to hyperosmotic and heat shock by preventing the aggregation of stress-denatured proteins and by disaggregating proteins, also in an autonomous, DnaK-independent fashion. Unfolded proteins bind initially to DnaJ; upon interaction with the DnaJ-bound protein, DnaK hydrolyzes its bound ATP, resulting in the formation of a stable complex. GrpE releases ADP from DnaK; ATP binding to DnaK triggers the release of the substrate protein, thus completing the reaction cycle. Several rounds of ATP-dependent interactions between DnaJ, DnaK and GrpE are required for fully efficient folding. Also involved, together with DnaK and GrpE, in the DNA replication of plasmids through activation of initiation proteins. In Coxiella burnetii (strain RSA 331 / Henzerling II), this protein is Chaperone protein DnaJ.